The primary structure comprises 311 residues: 3-dehydro-scyllo-inosose hydrolase (311 aa).

Zn(2+)-binding residues include Glu35, His37, Asp46, His117, and Glu173.

This sequence belongs to the creatininase superfamily. Homotrimer. Zn(2+) is required as a cofactor.

The catalysed reaction is 3-dehydro-scyllo-inosose + H2O = 5-dehydro-L-gluconate + H(+). It participates in polyol metabolism; myo-inositol metabolism. Catalyzes the ring-opening hydrolysis of 3-dehydro-scyllo-inosose (diketo-inositol) to 5-dehydro-L-gluconate, and thus probably functions in a myo-inositol degradation pathway together with IolG, IolM and IolO. In Thermotoga maritima (strain ATCC 43589 / DSM 3109 / JCM 10099 / NBRC 100826 / MSB8), this protein is 3-dehydro-scyllo-inosose hydrolase.